The primary structure comprises 268 residues: MSGGLKAEAASFALPGATLVDRVDLTITQGELVAIVGPNGAGKSTLLRMLSGDLRPTSGTVSLDGRALADYPPRALAARRAMLAQHTTVSFPFSVEEIVAMGADIDPRKAAPLFDAALRDVGLDHFRHRDITTLSGGEQQRAHFARILVQLWSGEADAGPGLLLLDEPTSSLDIRHQLDLAETARRCARRGTTVIAILHDLNLAARFADRIIVLSGGRIAADGAPAAVLRHELIADVFDVALTVNTDVAGQPFVLPELADDRRAAAHA.

The ABC transporter domain maps to 5-241; that stretch reads LKAEAASFAL…ELIADVFDVA (237 aa). 37–44 contributes to the ATP binding site; that stretch reads GPNGAGKS.

Belongs to the ABC transporter superfamily. Heme (hemin) importer (TC 3.A.1.14.5) family. In terms of assembly, the complex is composed of two ATP-binding proteins (HmuV), two transmembrane proteins (HmuU) and a solute-binding protein (HmuT).

It localises to the cell inner membrane. Part of the ABC transporter complex HmuTUV involved in hemin import. Responsible for energy coupling to the transport system. The protein is Hemin import ATP-binding protein HmuV of Rhodopseudomonas palustris (strain ATCC BAA-98 / CGA009).